The chain runs to 57 residues: Putative antitoxin VapB4 (57 aa).

Possibly the antitoxin component of a type II toxin-antitoxin (TA) system. Its cognate toxin is VapC4 (Potential). In Methanocaldococcus jannaschii (strain ATCC 43067 / DSM 2661 / JAL-1 / JCM 10045 / NBRC 100440) (Methanococcus jannaschii), this protein is Putative antitoxin VapB4 (vapB4).